Consider the following 218-residue polypeptide: Mediator of RNA polymerase II transcription subunit 20 (218 aa).

The protein belongs to the Mediator complex subunit 20 family. As to quaternary structure, component of the Mediator complex.

It localises to the nucleus. Component of the Mediator complex, a coactivator involved in the regulated transcription of nearly all RNA polymerase II-dependent genes. Mediator functions as a bridge to convey information from gene-specific regulatory proteins to the basal RNA polymerase II transcription machinery. Mediator is recruited to promoters by direct interactions with regulatory proteins and serves as a scaffold for the assembly of a functional preinitiation complex with RNA polymerase II and the general transcription factors. This Anopheles gambiae (African malaria mosquito) protein is Mediator of RNA polymerase II transcription subunit 20 (MED20).